Reading from the N-terminus, the 672-residue chain is DNA ligase (672 aa).

NAD(+) is bound by residues 32-36 (DEKYD), 82-83 (SL), and Glu113. Lys115 (N6-AMP-lysine intermediate) is an active-site residue. Arg136, Glu173, Lys290, and Lys314 together coordinate NAD(+). Zn(2+)-binding residues include Cys408, Cys411, Cys427, and Cys433. In terms of domain architecture, BRCT spans 592–672 (DNNNTLFRKK…EFLNIINVYL (81 aa)).

The protein belongs to the NAD-dependent DNA ligase family. LigA subfamily. The cofactor is Mg(2+). Mn(2+) serves as cofactor.

The catalysed reaction is NAD(+) + (deoxyribonucleotide)n-3'-hydroxyl + 5'-phospho-(deoxyribonucleotide)m = (deoxyribonucleotide)n+m + AMP + beta-nicotinamide D-nucleotide.. Its function is as follows. DNA ligase that catalyzes the formation of phosphodiester linkages between 5'-phosphoryl and 3'-hydroxyl groups in double-stranded DNA using NAD as a coenzyme and as the energy source for the reaction. It is essential for DNA replication and repair of damaged DNA. The chain is DNA ligase from Buchnera aphidicola subsp. Baizongia pistaciae (strain Bp).